The chain runs to 93 residues: Leydig cell tumor 10 kDa protein (93 aa).

Positions 1-41 (MAQGQRKFQAQKPKSKAAAAERSRGPRKGGRVIGPKKARVV) are disordered. The segment covering 7–18 (KFQAQKPKSKAA) has biased composition (low complexity). Residues 25 to 39 (GPRKGGRVIGPKKAR) are compositionally biased toward basic residues.

It belongs to the UPF0390 family. In terms of tissue distribution, leydig cell tumor, testis and placenta.

Its function is as follows. May have a potential role in hypercalcemia of malignancy. In Rattus norvegicus (Rat), this protein is Leydig cell tumor 10 kDa protein.